A 24-amino-acid polypeptide reads, in one-letter code: Glutathione S-transferase (24 aa).

This sequence belongs to the GST superfamily. Monomer and homodimer.

It is found in the cytoplasm. The enzyme catalyses RX + glutathione = an S-substituted glutathione + a halide anion + H(+). Functionally, conjugation of reduced glutathione to a wide number of exogenous and endogenous hydrophobic electrophiles. The polypeptide is Glutathione S-transferase (Pseudomonas sp. (strain CF600)).